A 361-amino-acid chain; its full sequence is 3-dehydroquinate synthase (361 aa).

NAD(+) contacts are provided by residues 106 to 110, 130 to 131, Lys-143, and Lys-152; these read GVVGD and TT. Zn(2+) contacts are provided by Glu-185, His-247, and His-264.

The protein belongs to the sugar phosphate cyclases superfamily. Dehydroquinate synthase family. NAD(+) is required as a cofactor. It depends on Co(2+) as a cofactor. Zn(2+) serves as cofactor.

It localises to the cytoplasm. It catalyses the reaction 7-phospho-2-dehydro-3-deoxy-D-arabino-heptonate = 3-dehydroquinate + phosphate. It participates in metabolic intermediate biosynthesis; chorismate biosynthesis; chorismate from D-erythrose 4-phosphate and phosphoenolpyruvate: step 2/7. Functionally, catalyzes the conversion of 3-deoxy-D-arabino-heptulosonate 7-phosphate (DAHP) to dehydroquinate (DHQ). This chain is 3-dehydroquinate synthase, found in Gloeobacter violaceus (strain ATCC 29082 / PCC 7421).